A 122-amino-acid chain; its full sequence is Large ribosomal subunit protein uL14 (122 aa).

It belongs to the universal ribosomal protein uL14 family. As to quaternary structure, part of the 50S ribosomal subunit. Forms a cluster with proteins L3 and L19. In the 70S ribosome, L14 and L19 interact and together make contacts with the 16S rRNA in bridges B5 and B8.

Functionally, binds to 23S rRNA. Forms part of two intersubunit bridges in the 70S ribosome. The chain is Large ribosomal subunit protein uL14 from Albidiferax ferrireducens (strain ATCC BAA-621 / DSM 15236 / T118) (Rhodoferax ferrireducens).